The sequence spans 345 residues: MISLGLILFSSVLCHVATAGRTCPKPDDIPFATVVPLKTFYDPGEQIAYTCQPGYVFRGLTRRFTCPLTGVWPTNTVRCIPRVCPFAGILENGAVRYTTFEYPNTISFACNTGFYLNGSSSAKCTEEGKWSVDLPVCTRVTCPPPSVPKFATLSVFKPLATNNSLYGNKAVFECLPHYAMFGNDTITCTAHGNWTTLPECREVKCPFPSRPDNGFVNYPAKQILYYKDKAMYGCHDTYTLDGPEVVECNKFGNWSAQPSCKASCKLSVKKATVLYQGERVKLQEKFKDGMLHGQKVSFYCKNKEKKCSYTEDAECIDGTIEIPKCFKEHSSLAFWKTDASDVKPC.

An N-terminal signal peptide occupies residues 1–19 (MISLGLILFSSVLCHVATA). Sushi domains are found at residues 21–81 (RTCP…RCIP), 82–139 (RVCP…VCTR), 140–202 (VTCP…ECRE), and 203–262 (VKCP…SCKA). Cystine bridges form between C23–C66, C51–C79, C84–C124, C110–C137, C142–C188, C174–C200, C205–C248, C234–C260, C264–C315, C300–C325, and C307–C345. The O-linked (GalNAc...) threonine glycan is linked to T33. N-linked (GlcNAc...) asparagine glycans are attached at residues N117, N162, N183, and N193. N253 is a glycosylation site (N-linked (GlcNAc...) asparagine). The tract at residues 263–345 (SCKLSVKKAT…KTDASDVKPC (83 aa)) is sushi-like.

In terms of tissue distribution, expressed by the liver and secreted in plasma.

It is found in the secreted. In terms of biological role, binds to various kinds of negatively charged substances such as heparin, phospholipids, and dextran sulfate. May prevent activation of the intrinsic blood coagulation cascade by binding to phospholipids on the surface of damaged cells. The chain is Beta-2-glycoprotein 1 (APOH) from Canis lupus familiaris (Dog).